The following is an 862-amino-acid chain: Protein translocase subunit SecA (862 aa).

ATP-binding positions include Q88, 106–110 (GEGKT), and D506. Zn(2+)-binding residues include C839, C841, C850, and H851.

This sequence belongs to the SecA family. In terms of assembly, monomer and homodimer. Part of the essential Sec protein translocation apparatus which comprises SecA, SecYEG and auxiliary proteins SecDF-YajC and YidC. It depends on Zn(2+) as a cofactor.

It localises to the cell inner membrane. It is found in the cytoplasm. It catalyses the reaction ATP + H2O + cellular proteinSide 1 = ADP + phosphate + cellular proteinSide 2.. Its function is as follows. Part of the Sec protein translocase complex. Interacts with the SecYEG preprotein conducting channel. Has a central role in coupling the hydrolysis of ATP to the transfer of proteins into and across the cell membrane, serving as an ATP-driven molecular motor driving the stepwise translocation of polypeptide chains across the membrane. In Campylobacter jejuni (strain RM1221), this protein is Protein translocase subunit SecA.